The primary structure comprises 366 residues: Cyclic amide hydrolase (366 aa).

The RU A stretch occupies residues 1–103 (MKVGVHKLAM…TLFTRAPDDG (103 aa)). Substrate is bound by residues Arg-51 and 82-83 (SG). An RU B region spans residues 110–247 (RLALGIGITR…CEVLLFGNAP (138 aa)). The active site involves Lys-160. Residues Arg-192, 230-231 (SA), Arg-327, and 346-347 (SG) contribute to the substrate site. Ser-230 serves as the catalytic Nucleophile. Residues 253 to 366 (FRIGHGVLKD…AAPIAAIVRA (114 aa)) are RU C.

The protein belongs to the cyclic amide hydrolase (CyAH) family. Homotetramer.

Functionally, cyclic amide hydrolase of unknown substrate specificity. Catalyzes the hydrolytic ring-opening of a cyclic amide. Does not act on cyanuric acid nor barbituric acid. The chain is Cyclic amide hydrolase from Azorhizobium caulinodans (strain ATCC 43989 / DSM 5975 / JCM 20966 / LMG 6465 / NBRC 14845 / NCIMB 13405 / ORS 571).